The chain runs to 458 residues: tRNA-2-methylthio-N(6)-dimethylallyladenosine synthase (458 aa).

The region spanning 15–134 (KKVFIKTYGC…LPDLLEQTKQ (120 aa)) is the MTTase N-terminal domain. [4Fe-4S] cluster contacts are provided by cysteine 24, cysteine 60, cysteine 97, cysteine 175, cysteine 179, and cysteine 182. Residues 161 to 393 (RKRGVSAFLT…QVLLLEQQNA (233 aa)) form the Radical SAM core domain. The region spanning 396–457 (RSKIGQTTDV…SNSFVGEIAN (62 aa)) is the TRAM domain.

The protein belongs to the methylthiotransferase family. MiaB subfamily. As to quaternary structure, monomer. The cofactor is [4Fe-4S] cluster.

Its subcellular location is the cytoplasm. It carries out the reaction N(6)-dimethylallyladenosine(37) in tRNA + (sulfur carrier)-SH + AH2 + 2 S-adenosyl-L-methionine = 2-methylsulfanyl-N(6)-dimethylallyladenosine(37) in tRNA + (sulfur carrier)-H + 5'-deoxyadenosine + L-methionine + A + S-adenosyl-L-homocysteine + 2 H(+). In terms of biological role, catalyzes the methylthiolation of N6-(dimethylallyl)adenosine (i(6)A), leading to the formation of 2-methylthio-N6-(dimethylallyl)adenosine (ms(2)i(6)A) at position 37 in tRNAs that read codons beginning with uridine. This is tRNA-2-methylthio-N(6)-dimethylallyladenosine synthase from Bartonella quintana (strain Toulouse) (Rochalimaea quintana).